The chain runs to 327 residues: Zinc transport protein ZntB (327 aa).

The Cytoplasmic segment spans residues 1 to 271; sequence MDVVEGKALQ…AMNRRTYTMS (271 aa). The helical transmembrane segment at 272 to 292 threads the bilayer; sequence LLAMVFLPTTFLTGLFGVNLG. The Periplasmic portion of the chain corresponds to 293-300; that stretch reads GIPGNTDA. The helical transmembrane segment at 301 to 321 threads the bilayer; that stretch reads FGFTIFCMMLVVLVLSVAWWL. The Cytoplasmic portion of the chain corresponds to 322-327; the sequence is KRSKWL.

The protein belongs to the CorA metal ion transporter (MIT) (TC 1.A.35) family.

Its subcellular location is the cell inner membrane. The enzyme catalyses Zn(2+)(out) + H(+)(out) = Zn(2+)(in) + H(+)(in). Functionally, zinc transporter. Acts as a Zn(2+):proton symporter, which likely mediates zinc ion uptake. This is Zinc transport protein ZntB from Yersinia pseudotuberculosis serotype O:1b (strain IP 31758).